A 146-amino-acid polypeptide reads, in one-letter code: Benzoylsuccinyl-CoA thiolase subunit BbsA (146 aa).

Zn(2+) is bound by residues Cys-42, Cys-45, Cys-55, and Cys-58.

This sequence belongs to the BbsA family. Heterotetramer composed of two BbsA subunits and two BbsB subunits. Both BbsA and BbsB are essential for enzymatic activity.

The catalysed reaction is (S)-2-benzoylsuccinyl-CoA + CoA = benzoyl-CoA + succinyl-CoA. Its pathway is xenobiotic degradation; toluene degradation. Functionally, component of the BbsAB thiolase complex, which catalyzes the thiolytic cleavage of (S)-2-benzoylsuccinyl-CoA to succinyl-CoA and benzoyl-CoA, the final step of anaerobic toluene metabolism. The BbsA subunit critically contributes to an induced-fit process for productive binding of a CoA substrate into the active site of BbsB. In Geobacter metallireducens (strain ATCC 53774 / DSM 7210 / GS-15), this protein is Benzoylsuccinyl-CoA thiolase subunit BbsA.